Here is a 631-residue protein sequence, read N- to C-terminus: Putative ATP-dependent DNA helicase Q1 (631 aa).

Residues 118-293 (INAVMSKEDA…KDMLGIQAAL (176 aa)) enclose the Helicase ATP-binding domain. 131–138 (LSTGGGKS) provides a ligand contact to ATP. Residues 237–240 (DEVH) carry the DEVH box motif. In terms of domain architecture, Helicase C-terminal spans 318–466 (CTEEIAKTIK…NLYNMVRYAA (149 aa)). Residues cysteine 471, cysteine 489, cysteine 493, and cysteine 496 each contribute to the Zn(2+) site. The disordered stretch occupies residues 610 to 631 (ESKSRKRKASSSVEEEDVMVLD). Residues 622 to 631 (VEEEDVMVLD) are compositionally biased toward acidic residues.

Belongs to the helicase family. RecQ subfamily. Zn(2+) is required as a cofactor.

It is found in the nucleus. It carries out the reaction Couples ATP hydrolysis with the unwinding of duplex DNA by translocating in the 3'-5' direction.. It catalyses the reaction ATP + H2O = ADP + phosphate + H(+). Functionally, DNA helicase that may play a role in the repair of DNA that is damaged by ultraviolet light or other mutagens. Exhibits a magnesium-dependent ATP-dependent DNA-helicase activity that unwinds single- and double-stranded DNA in a 3'-5' direction. This is Putative ATP-dependent DNA helicase Q1 from Caenorhabditis elegans.